The sequence spans 73 residues: Somatostatin-2 (73 aa).

A propeptide spanning residues 1-45 (SAGLLTQEWSAVEDLLAQMSLPEADAQRDAEMVSTATGGGRMNQE) is cleaved from the precursor. The tract at residues 23–58 (EADAQRDAEMVSTATGGGRMNQESIEPPNNLPPRER) is disordered. Cysteine 62 and cysteine 73 form a disulfide bridge.

This sequence belongs to the somatostatin family.

It localises to the secreted. Functionally, somatostatin inhibits the release of somatotropin. This chain is Somatostatin-2 (sst2), found in Platichthys flesus (European flounder).